The primary structure comprises 339 residues: tRNA pseudouridine synthase D (339 aa).

Aspartate 80 acts as the Nucleophile in catalysis. One can recognise a TRUD domain in the interval 155–311 (GFPNYFTEQR…AKGFSWAFEL (157 aa)).

The protein belongs to the pseudouridine synthase TruD family.

It carries out the reaction uridine(13) in tRNA = pseudouridine(13) in tRNA. Functionally, responsible for synthesis of pseudouridine from uracil-13 in transfer RNAs. This Haemophilus influenzae (strain PittEE) protein is tRNA pseudouridine synthase D.